The chain runs to 214 residues: Thymidylate kinase (214 aa).

Residue 12–19 (GGEGAGKS) coordinates ATP.

The protein belongs to the thymidylate kinase family.

It catalyses the reaction dTMP + ATP = dTDP + ADP. Its function is as follows. Phosphorylation of dTMP to form dTDP in both de novo and salvage pathways of dTTP synthesis. The protein is Thymidylate kinase of Gluconobacter oxydans (strain 621H) (Gluconobacter suboxydans).